A 632-amino-acid chain; its full sequence is Extracellular metalloproteinase 2 (632 aa).

An N-terminal signal peptide occupies residues methionine 1 to glycine 19. A propeptide spanning residues leucine 20–serine 244 is cleaved from the precursor. Residue asparagine 270 is glycosylated (N-linked (GlcNAc...) asparagine). Histidine 429 is a binding site for Zn(2+). Glutamate 430 is a catalytic residue. Histidine 433 serves as a coordination point for Zn(2+).

Belongs to the peptidase M36 family. The cofactor is Zn(2+).

Its subcellular location is the secreted. Secreted metalloproteinase that allows assimilation of proteinaceous substrates and probably acts as a virulence factor. The polypeptide is Extracellular metalloproteinase 2 (MEP2) (Arthroderma gypseum (strain ATCC MYA-4604 / CBS 118893) (Microsporum gypseum)).